The primary structure comprises 483 residues: UDP-N-acetylmuramate--L-alanine ligase (483 aa).

Residue 122–128 participates in ATP binding; the sequence is GSHGKTT.

This sequence belongs to the MurCDEF family.

Its subcellular location is the cytoplasm. The enzyme catalyses UDP-N-acetyl-alpha-D-muramate + L-alanine + ATP = UDP-N-acetyl-alpha-D-muramoyl-L-alanine + ADP + phosphate + H(+). It functions in the pathway cell wall biogenesis; peptidoglycan biosynthesis. In terms of biological role, cell wall formation. The polypeptide is UDP-N-acetylmuramate--L-alanine ligase (Synechococcus sp. (strain CC9311)).